Here is a 325-residue protein sequence, read N- to C-terminus: Protease HtpX homolog (325 aa).

A helical transmembrane segment spans residues 20–40 (IGYLLGGGGGMMIALVIAVAM). H130 serves as a coordination point for Zn(2+). E131 is a catalytic residue. Residue H134 coordinates Zn(2+). A run of 2 helical transmembrane segments spans residues 145 to 165 (IVAT…FLGG) and 173 to 193 (VMGV…AMIV). E202 contributes to the Zn(2+) binding site. The tract at residues 288–325 (AMTARAAAPSQNSGPWGQRSDNAGGNSNGGSRYRGPWS) is disordered. A compositionally biased stretch (low complexity) spans 306 to 325 (RSDNAGGNSNGGSRYRGPWS).

It belongs to the peptidase M48B family. Requires Zn(2+) as cofactor.

The protein localises to the cell inner membrane. The protein is Protease HtpX homolog of Brucella suis (strain ATCC 23445 / NCTC 10510).